Consider the following 201-residue polypeptide: Holliday junction branch migration complex subunit RuvA (201 aa).

Residues 1-63 (MYDYIKGIVK…EDNISLFGFQ (63 aa)) are domain I. The segment at 64 to 142 (STEERYLFKK…DVVASEIVYK (79 aa)) is domain II. A flexible linker region spans residues 143-153 (AAENDIVTGLS). The segment at 153-201 (SPQLEEAVLALEALGYSTRELKKVIPKMAKENDLTSDAYIKLALRLMTK) is domain III.

Belongs to the RuvA family. In terms of assembly, homotetramer. Forms an RuvA(8)-RuvB(12)-Holliday junction (HJ) complex. HJ DNA is sandwiched between 2 RuvA tetramers; dsDNA enters through RuvA and exits via RuvB. An RuvB hexamer assembles on each DNA strand where it exits the tetramer. Each RuvB hexamer is contacted by two RuvA subunits (via domain III) on 2 adjacent RuvB subunits; this complex drives branch migration. In the full resolvosome a probable DNA-RuvA(4)-RuvB(12)-RuvC(2) complex forms which resolves the HJ.

The protein localises to the cytoplasm. Its function is as follows. The RuvA-RuvB-RuvC complex processes Holliday junction (HJ) DNA during genetic recombination and DNA repair, while the RuvA-RuvB complex plays an important role in the rescue of blocked DNA replication forks via replication fork reversal (RFR). RuvA specifically binds to HJ cruciform DNA, conferring on it an open structure. The RuvB hexamer acts as an ATP-dependent pump, pulling dsDNA into and through the RuvAB complex. HJ branch migration allows RuvC to scan DNA until it finds its consensus sequence, where it cleaves and resolves the cruciform DNA. This is Holliday junction branch migration complex subunit RuvA from Listeria innocua serovar 6a (strain ATCC BAA-680 / CLIP 11262).